A 154-amino-acid chain; its full sequence is uncharacterized protein (154 aa).

In terms of biological role, this protein may be involved in virus assembly. Essential for virus function. This is an uncharacterized protein from Saccharolobus solfataricus (Sulfolobus solfataricus).